We begin with the raw amino-acid sequence, 209 residues long: Imidazole glycerol phosphate synthase subunit HisH (209 aa).

The 205-residue stretch at 1-205 (MIAIIDYGMG…QGVVEAWKSS (205 aa)) folds into the Glutamine amidotransferase type-1 domain. Cysteine 79 serves as the catalytic Nucleophile. Residues histidine 180 and glutamate 182 contribute to the active site.

Heterodimer of HisH and HisF.

It localises to the cytoplasm. It carries out the reaction 5-[(5-phospho-1-deoxy-D-ribulos-1-ylimino)methylamino]-1-(5-phospho-beta-D-ribosyl)imidazole-4-carboxamide + L-glutamine = D-erythro-1-(imidazol-4-yl)glycerol 3-phosphate + 5-amino-1-(5-phospho-beta-D-ribosyl)imidazole-4-carboxamide + L-glutamate + H(+). It catalyses the reaction L-glutamine + H2O = L-glutamate + NH4(+). It participates in amino-acid biosynthesis; L-histidine biosynthesis; L-histidine from 5-phospho-alpha-D-ribose 1-diphosphate: step 5/9. Its function is as follows. IGPS catalyzes the conversion of PRFAR and glutamine to IGP, AICAR and glutamate. The HisH subunit catalyzes the hydrolysis of glutamine to glutamate and ammonia as part of the synthesis of IGP and AICAR. The resulting ammonia molecule is channeled to the active site of HisF. The chain is Imidazole glycerol phosphate synthase subunit HisH from Bacillus cereus (strain B4264).